The sequence spans 137 residues: Profilin-3 (137 aa).

This sequence belongs to the profilin family. Interacts with ACTRT3.

It localises to the cytoplasm. Its subcellular location is the cytoskeleton. It is found in the nucleus. In terms of biological role, binds to actin and affects the structure of the cytoskeleton. Binds to poly-L-proline, phosphatidylinositol 3-phosphate (PtdIns(3)P), phosphatidylinositol 4,5-bisphosphate (PtdIns(4,5)P2) and phosphatidylinositol 4-phosphate (PtdIns(4)P). Slightly reduces actin polymerization. May be involved in spermatogenesis. This Bos taurus (Bovine) protein is Profilin-3 (PFN3).